A 310-amino-acid chain; its full sequence is Glutaminase (310 aa).

Substrate contacts are provided by S66, N117, E161, N168, Y192, Y244, and V262. Position 294 is an N6-acetyllysine (K294).

Belongs to the glutaminase family. Homotetramer.

It carries out the reaction L-glutamine + H2O = L-glutamate + NH4(+). The polypeptide is Glutaminase (Escherichia coli O81 (strain ED1a)).